The chain runs to 553 residues: MAEEESEFLEAYAGIRTAYKAAMTQVDLAVSHEEQESPGQAIVAYELALRMIEDTFGIPVGLPNKIDTVQAEWNDACALIQKLKSAETELRYRLKVLRSQKQSIDDSAVEATEESRAEMDTKRPPLLAENPSTQYGIANASGAPKTYRELAAGLRELLAVRDAKVLLDELFRAQVKMYRIEASGSVTTISGSSTMSLVMCTVGGKWKYLSGIYFIQCSMPNEGTAGIWLYPLVPSITNCYQTEYGAFIFPDMECQQPGNAFGLMLTKEGQTSRTEDELEDLQQFFLDLLEAVLAGTVVQLKSPTSQRAGLASDTVSGSEQVSRHIVSAADFIASNLVRGAEKTGGFMLRSTPYIISKMTPASMDAQVPSSVQTSVEVAQKVTHAAAGMTGWIAGKVGTASMAVGRYLAPHIQEQGSKLLQKGFGYDTSEANSTMEGAMTIAAGAVEGVSTVFDGLETSAKILGSSLSENSVKIIEHKYGQQTGNLASGTFDTVGNVFVVSQNVNYITPKGIAKKMVKRTGEAVVSDYKRDLRKSESHYINAGSLYPDLRALKE.

Residues 15 to 96 enclose the MIT domain; it reads IRTAYKAAMT…ETELRYRLKV (82 aa). The segment at 105 to 130 is disordered; sequence DDSAVEATEESRAEMDTKRPPLLAEN. A compositionally biased stretch (basic and acidic residues) spans 113-123; it reads EESRAEMDTKR. The Senescence domain occupies 325–509; it reads IVSAADFIAS…SQNVNYITPK (185 aa).

In terms of assembly, interacts with Eps-15 (via C-terminal region); the interaction is required for spartin localization to the NMJ presynaptic membrane. Expressed in larval brain, ventral nerve cord and neuropil (at protein level).

The protein localises to the presynaptic cell membrane. The protein resides in the early endosome. Its subcellular location is the lipid droplet. During postembryonic development, functions with endocytic adapter Eps-15 in neurons to restrain synaptic growth, by inhibiting BMP signaling, and to control synaptic endocytosis. Required presynaptically for neuromuscular junction (NMJ) neurotransmission. Inhibits neuronal BMP signaling by promoting endocytic internalization and subsequent endosomal trafficking of the BMP receptor wit. In this way, regulates the Fmr1 translational regulator controlling Futsch expression to modulate neuronal microtubule stability, which controls both synaptogenesis and neuronal survival. In Drosophila melanogaster (Fruit fly), this protein is Protein spartin.